The sequence spans 203 residues: MIGRLRGYILEKQPPLVLLEANGVGYEVHMPMTCFYELPELGQEAIVFTQFVVREDAQLLYGFNDKQERALFRELIKVNGVGPKLALAILSGMSAQQFVSAVEREEITSLVKLPGVGKKTAERLVVEMKDRFKGLNGDLFNNSSEITLPTAAQAAELDAEAEAASALVALGYKPQEASRMVSKIAKPGADCETLIRDALRAAL.

The tract at residues 1-64 is domain I; it reads MIGRLRGYIL…EDAQLLYGFN (64 aa). Positions 65–142 are domain II; it reads DKQERALFRE…KGLNGDLFNN (78 aa). The flexible linker stretch occupies residues 143-154; sequence SSEITLPTAAQA. The tract at residues 155–203 is domain III; that stretch reads AELDAEAEAASALVALGYKPQEASRMVSKIAKPGADCETLIRDALRAAL.

It belongs to the RuvA family. Homotetramer. Forms an RuvA(8)-RuvB(12)-Holliday junction (HJ) complex. HJ DNA is sandwiched between 2 RuvA tetramers; dsDNA enters through RuvA and exits via RuvB. An RuvB hexamer assembles on each DNA strand where it exits the tetramer. Each RuvB hexamer is contacted by two RuvA subunits (via domain III) on 2 adjacent RuvB subunits; this complex drives branch migration. In the full resolvosome a probable DNA-RuvA(4)-RuvB(12)-RuvC(2) complex forms which resolves the HJ.

The protein localises to the cytoplasm. In terms of biological role, the RuvA-RuvB-RuvC complex processes Holliday junction (HJ) DNA during genetic recombination and DNA repair, while the RuvA-RuvB complex plays an important role in the rescue of blocked DNA replication forks via replication fork reversal (RFR). RuvA specifically binds to HJ cruciform DNA, conferring on it an open structure. The RuvB hexamer acts as an ATP-dependent pump, pulling dsDNA into and through the RuvAB complex. HJ branch migration allows RuvC to scan DNA until it finds its consensus sequence, where it cleaves and resolves the cruciform DNA. The sequence is that of Holliday junction branch migration complex subunit RuvA from Serratia proteamaculans (strain 568).